A 64-amino-acid chain; its full sequence is Large ribosomal subunit protein bL35 (64 aa).

Basic residues-rich tracts occupy residues 1-15 and 23-43; these read MPKQKSHSGASKRFR and VRQKANRRHLLEHKSSRRTRR. Residues 1–64 are disordered; it reads MPKQKSHSGA…AGRIKRLLAR (64 aa).

The protein belongs to the bacterial ribosomal protein bL35 family.

This Frankia alni (strain DSM 45986 / CECT 9034 / ACN14a) protein is Large ribosomal subunit protein bL35.